Here is a 272-residue protein sequence, read N- to C-terminus: Undecaprenyl-diphosphatase (272 aa).

7 helical membrane passes run 6 to 26 (SLLI…LPVS), 45 to 65 (AKTF…VMFW), 92 to 112 (THIL…HDVI), 115 to 135 (LFYP…LLAA), 189 to 209 (YAAS…ATVL), 225 to 245 (MFAV…KTFL), and 251 to 271 (ISFV…YMVF).

The protein belongs to the UppP family.

Its subcellular location is the cell inner membrane. It carries out the reaction di-trans,octa-cis-undecaprenyl diphosphate + H2O = di-trans,octa-cis-undecaprenyl phosphate + phosphate + H(+). In terms of biological role, catalyzes the dephosphorylation of undecaprenyl diphosphate (UPP). Confers resistance to bacitracin. The protein is Undecaprenyl-diphosphatase of Pectobacterium carotovorum subsp. carotovorum (strain PC1).